The following is a 284-amino-acid chain: MAKKVSKFFRIGVEGDTCDGRVISAQDIQEMAETFDPRVYGCRINLEHLRGILPDGIFKRYGDVAELKAEKIDDDSALKGKWALFAKITPTDDLIAMNKAAQKVYTSMEIQPNFANTGKCYLVGLAVTDDPASLGTEYLEFCRTAKHNPLNRFKLSPENLISVATPVELEFEDLPETVFTALTEKVKSIFGRKQASDDARLNDVHEAVTAVAEHVQEKLSATEQRLAEMETAFSALKQEVTDRADETSQAFTRLKNSLDHTESLTQQRRSKATGGGGDALMTNC.

Catalysis depends on residues aspartate 19, histidine 48, and serine 107. Residues 206 to 243 (EAVTAVAEHVQEKLSATEQRLAEMETAFSALKQEVTDR) are a coiled coil. The segment at 258–284 (LDHTESLTQQRRSKATGGGGDALMTNC) is disordered.

It belongs to the P2likevirus scaffolding protein family. Homomultimer. Post-translationally, autocleaves itself into an N-terminal fragment containing the protease activity, that remains in the capsid following maturation.

Functionally, scaffolding protein and protease involved in the icosahedric procapsid assembly. Coassembles with the capsid proteins to form the procapsid, in which the scaffolding protein is found within the external shell of icosahedrally arranged capsid protein subunits. In a subsequent step the scaffolding protein molecules are cleaved by the viral protease activity. This is Capsid assembly scaffolding protein (O) from Enterobacteriaceae (Bacteriophage P2).